The sequence spans 759 residues: MSSNNNFDNNKNNNNNNNSNQNNNNIDNGGNNNETNPTTWKFKAQTPTDFNITVRKRRNSEPGVLVQRSYKNYVTHWKLETKKPTKYKDAKEERLRQQAQQQQQAQQQAQQQQQQAQQQQQQQQQQQQQQQQQQQAQQQAQQQQNQHQQNQHQQNQHQQHQQNQNQNQNQNQNQNQNQNQNQNQNQNQNQNQNQNQNQSQNQHLHQLNQHHPIQHQHHSNNHSNNHSNNHPNQQQNHQQNHQQNQYSQQNYQQQNQGQNNYNNNSFQGNSNNNYNNGYNNNSNNSNNNNNNNNNNNNNNNNNNNNNNNNNNKNSISPTSSPLLFPSPSSAFTSIKSTPPKSISGSSSPFQDQARSPSSSFFHDRDLPFSRGGAQRKPSIGDEFKFHPYSLNNKVTNLIDNCNNSNNNNNNNCTESNDDDSPLNGGLGYSRLSQRRISLPILANRPPSPERSLSPIHERNSLNIINGFNKNNNNNNNNNNNNNNSNNNNNNNGNNNPLPHINFENRRPSREEPIVIINNNNDNNYNKIPSQHMHDKKSSPTPRSILKQTISKYHGNECEEEEEYNTNSNYYGDNDNRNISNQNLVASNASQSSGSKLPSIQSLLNDVSISDNKSKSNSNSPTIIGMNNNFVGGANENISKLSSITMNHHSNFNNLVDDNSHISNNNYNNHHNNNNNNNNNTNNNNHNNNINNNNNNNNNSNNNSNNNNNNSNNNNNNNNNSSNNNNNNNNNNNNNSNNNNNNNNDNNNRSPRNMLFYLNK.

Composition is skewed to low complexity over residues 1-36 (MSSNNNFDNNKNNNNNNNSNQNNNNIDNGGNNNETN), 142-211 (QQQN…NQHH), and 221-347 (NHSN…GSSS). Disordered regions lie at residues 1-47 (MSSN…AQTP), 142-380 (QQQN…PSIG), 409-428 (NNNCTESNDDDSPLNGGLGY), 463-504 (IING…NFEN), and 654-759 (LVDD…YLNK). The span at 348 to 360 (PFQDQARSPSSSF) shows a compositional bias: polar residues. Composition is skewed to low complexity over residues 463 to 495 (IINGFNKNNNNNNNNNNNNNNSNNNNNNNGNNN) and 660 to 747 (HISN…DNNN).

This is an uncharacterized protein from Dictyostelium discoideum (Social amoeba).